A 468-amino-acid polypeptide reads, in one-letter code: Soluble pyridine nucleotide transhydrogenase (468 aa).

36–45 (ERYKNVGGGC) contributes to the FAD binding site.

This sequence belongs to the class-I pyridine nucleotide-disulfide oxidoreductase family. The cofactor is FAD.

The protein localises to the cytoplasm. It catalyses the reaction NAD(+) + NADPH = NADH + NADP(+). Functionally, conversion of NADPH, generated by peripheral catabolic pathways, to NADH, which can enter the respiratory chain for energy generation. In Hamiltonella defensa subsp. Acyrthosiphon pisum (strain 5AT), this protein is Soluble pyridine nucleotide transhydrogenase.